We begin with the raw amino-acid sequence, 190 residues long: Elongation factor P-like protein (190 aa).

It belongs to the elongation factor P family.

This Salmonella gallinarum (strain 287/91 / NCTC 13346) protein is Elongation factor P-like protein.